Consider the following 172-residue polypeptide: RNA silencing suppressor p19 (172 aa).

A compositionally biased stretch (basic and acidic residues) spans 1–20 (MERVIQGNDAREQANGERWD). The interval 1–37 (MERVIQGNDAREQANGERWDGGSGGTTSGFKLPDESP) is disordered.

The protein belongs to the tombusvirus protein p19 family. Homodimer.

Its function is as follows. Viral suppressor of RNA silencing which binds specifically to silencing RNAs (siRNAs). Acts as a molecular caliper to specifically select siRNAs based on the length of the duplex region of the RNA. The polypeptide is RNA silencing suppressor p19 (Cynara cardunculus var. scolymus (Globe artichoke)).